The sequence spans 226 residues: Ribose-5-phosphate isomerase A (226 aa).

Substrate-binding positions include 26–29 (TGST), 82–85 (DGAD), and 95–98 (KGGG). Glu104 (proton acceptor) is an active-site residue. Lys122 provides a ligand contact to substrate.

Belongs to the ribose 5-phosphate isomerase family. As to quaternary structure, homodimer.

The enzyme catalyses aldehydo-D-ribose 5-phosphate = D-ribulose 5-phosphate. Its pathway is carbohydrate degradation; pentose phosphate pathway; D-ribose 5-phosphate from D-ribulose 5-phosphate (non-oxidative stage): step 1/1. Its function is as follows. Catalyzes the reversible conversion of ribose-5-phosphate to ribulose 5-phosphate. The protein is Ribose-5-phosphate isomerase A of Streptococcus uberis (strain ATCC BAA-854 / 0140J).